A 172-amino-acid chain; its full sequence is Protein GrpE (172 aa).

Low complexity predominate over residues 1–11 (MSEENNSQNSN). The segment at 1 to 22 (MSEENNSQNSNPPNPENGEIAS) is disordered.

This sequence belongs to the GrpE family. Homodimer.

Its subcellular location is the cytoplasm. In terms of biological role, participates actively in the response to hyperosmotic and heat shock by preventing the aggregation of stress-denatured proteins, in association with DnaK and GrpE. It is the nucleotide exchange factor for DnaK and may function as a thermosensor. Unfolded proteins bind initially to DnaJ; upon interaction with the DnaJ-bound protein, DnaK hydrolyzes its bound ATP, resulting in the formation of a stable complex. GrpE releases ADP from DnaK; ATP binding to DnaK triggers the release of the substrate protein, thus completing the reaction cycle. Several rounds of ATP-dependent interactions between DnaJ, DnaK and GrpE are required for fully efficient folding. In Bdellovibrio bacteriovorus (strain ATCC 15356 / DSM 50701 / NCIMB 9529 / HD100), this protein is Protein GrpE.